The primary structure comprises 211 residues: Probable oligoribonuclease (211 aa).

The Exonuclease domain occupies 38-202 (IVWMDLEMTG…DDIRESIKEL (165 aa)). Tyr159 is an active-site residue.

The protein belongs to the oligoribonuclease family.

Its function is as follows. 3'-to-5' exoribonuclease specific for small oligoribonucleotides. The chain is Probable oligoribonuclease from Drosophila melanogaster (Fruit fly).